The sequence spans 395 residues: Elongation factor Tu (395 aa).

Residues lysine 10 to glutamate 204 form the tr-type G domain. Residues glycine 19–threonine 26 are G1. A GTP-binding site is contributed by glycine 19–threonine 26. Threonine 26 provides a ligand contact to Mg(2+). Positions glycine 60–asparagine 64 are G2. The tract at residues aspartate 81–glycine 84 is G3. GTP is bound by residues aspartate 81–histidine 85 and asparagine 136–aspartate 139. The tract at residues asparagine 136 to aspartate 139 is G4. Residues serine 174–leucine 176 form a G5 region.

It belongs to the TRAFAC class translation factor GTPase superfamily. Classic translation factor GTPase family. EF-Tu/EF-1A subfamily. As to quaternary structure, monomer.

It localises to the cytoplasm. The enzyme catalyses GTP + H2O = GDP + phosphate + H(+). In terms of biological role, GTP hydrolase that promotes the GTP-dependent binding of aminoacyl-tRNA to the A-site of ribosomes during protein biosynthesis. This Christiangramia forsetii (strain DSM 17595 / CGMCC 1.15422 / KT0803) (Gramella forsetii) protein is Elongation factor Tu.